The chain runs to 186 residues: Sec-independent protein translocase protein TatB (186 aa).

Residues 1–21 traverse the membrane as a helical segment; the sequence is MFDIGFSELILLMVLGLVVLG. The segment at 120 to 186 is disordered; that stretch reads NAEKSQNAIS…SKSQSSKTKS (67 aa). Residues 177–186 show a composition bias toward polar residues; that stretch reads SKSQSSKTKS.

It belongs to the TatB family. In terms of assembly, the Tat system comprises two distinct complexes: a TatABC complex, containing multiple copies of TatA, TatB and TatC subunits, and a separate TatA complex, containing only TatA subunits. Substrates initially bind to the TatABC complex, which probably triggers association of the separate TatA complex to form the active translocon.

The protein resides in the cell inner membrane. In terms of biological role, part of the twin-arginine translocation (Tat) system that transports large folded proteins containing a characteristic twin-arginine motif in their signal peptide across membranes. Together with TatC, TatB is part of a receptor directly interacting with Tat signal peptides. TatB may form an oligomeric binding site that transiently accommodates folded Tat precursor proteins before their translocation. This is Sec-independent protein translocase protein TatB from Haemophilus influenzae (strain ATCC 51907 / DSM 11121 / KW20 / Rd).